Reading from the N-terminus, the 652-residue chain is DNA ligase (652 aa).

NAD(+)-binding positions include 29–33 (DSEYD), 78–79 (SL), and E107. K109 (N6-AMP-lysine intermediate) is an active-site residue. The NAD(+) site is built by R130, E164, K278, and K302. Zn(2+) contacts are provided by C395, C398, C413, and C418. Residues 577-652 (AADAALSGMT…IRDEDWLDSL (76 aa)) form the BRCT domain.

Belongs to the NAD-dependent DNA ligase family. LigA subfamily. The cofactor is Mg(2+). Mn(2+) is required as a cofactor.

The enzyme catalyses NAD(+) + (deoxyribonucleotide)n-3'-hydroxyl + 5'-phospho-(deoxyribonucleotide)m = (deoxyribonucleotide)n+m + AMP + beta-nicotinamide D-nucleotide.. Functionally, DNA ligase that catalyzes the formation of phosphodiester linkages between 5'-phosphoryl and 3'-hydroxyl groups in double-stranded DNA using NAD as a coenzyme and as the energy source for the reaction. It is essential for DNA replication and repair of damaged DNA. This Streptococcus sanguinis (strain SK36) protein is DNA ligase.